The sequence spans 300 residues: Cation-efflux pump FieF (300 aa).

Residues 24-44 (LLIKIFAWWYTGSVSILAALV) form a helical membrane-spanning segment. Positions 45 and 49 each coordinate Zn(2+). A run of 2 helical transmembrane segments spans residues 82-102 (AALA…LTSI) and 114-134 (PGVG…LVTF). Zn(2+) contacts are provided by histidine 153 and aspartate 157. A run of 2 helical transmembrane segments spans residues 156–176 (SDVM…YGWH) and 178–198 (ADAL…LRMG).

Belongs to the cation diffusion facilitator (CDF) transporter (TC 2.A.4) family. FieF subfamily. As to quaternary structure, homodimer.

Its subcellular location is the cell inner membrane. It catalyses the reaction Zn(2+)(in) + H(+)(out) = Zn(2+)(out) + H(+)(in). The catalysed reaction is Cd(2+)(in) + H(+)(out) = Cd(2+)(out) + H(+)(in). The enzyme catalyses Fe(2+)(in) + H(+)(out) = Fe(2+)(out) + H(+)(in). Divalent metal cation transporter which exports Zn(2+), Cd(2+) and possibly Fe(2+). May be involved in zinc and iron detoxification by efflux. The chain is Cation-efflux pump FieF from Salmonella choleraesuis (strain SC-B67).